The following is a 382-amino-acid chain: MAP kinase-activated protein kinase 3 (382 aa).

At M1 the chain carries N-acetylmethionine. The disordered stretch occupies residues 1-34 (MDGETAEEQGGPVPPPVAPGGPGLGGAPGGRREP). Gly residues predominate over residues 20–29 (GGPGLGGAPG). The 261-residue stretch at 44–304 (QLSKQVLGLG…ITQFMNHPWI (261 aa)) folds into the Protein kinase domain. ATP-binding positions include 50–58 (LGLGVNGKV) and K73. Catalysis depends on D166, which acts as the Proton acceptor. T201 is modified (phosphothreonine; by MAPK14). A Phosphoserine; by MAPK14 modification is found at S251. At S307 the chain carries Phosphoserine; by autocatalysis. An autoinhibitory helix region spans residues 307–343 (SMVVPQTPLHTARVLQEDKDHWDEVKEEMTSALATMR). The residue at position 313 (T313) is a Phosphothreonine; by MAPK14. A Nuclear export signal (NES) motif is present at residues 335–344 (MTSALATMRV). The tract at residues 345–369 (DYDQVKIKDLKTSNNRLLNKRRKKQ) is p38 MAPK-binding site. 2 short sequence motifs (bipartite nuclear localization signal) span residues 350 to 353 (KIKD) and 364 to 368 (KRRKK). A disordered region spans residues 357-382 (SNNRLLNKRRKKQAGSSSASQGCNNQ). Polar residues predominate over residues 370–382 (AGSSSASQGCNNQ).

It belongs to the protein kinase superfamily. CAMK Ser/Thr protein kinase family. In terms of assembly, heterodimer with p38-alpha/MAPK14. The heterodimer with p38-alpha/MAPK14 forms a stable complex: molecules are positioned 'face to face' so that the ATP-binding sites of both kinases are at the heterodimer interface. Interacts with TCF3 and with polycomb proteins, such as PCH2 and BMI1/PCGF4. Post-translationally, phosphorylated and activated by MAPK1/ERK2 and MAPK3/ERK1. Phosphorylated and activated by MAP kinase p38-alpha/MAPK14 at Thr-201, Ser-251 and Thr-313. Widely expressed, with a higher expression level observed in heart and skeletal muscle. No expression in brain. Expressed in the retinal pigment epithelium.

It is found in the nucleus. Its subcellular location is the cytoplasm. The catalysed reaction is L-seryl-[protein] + ATP = O-phospho-L-seryl-[protein] + ADP + H(+). The enzyme catalyses L-threonyl-[protein] + ATP = O-phospho-L-threonyl-[protein] + ADP + H(+). Its activity is regulated as follows. Activated following phosphorylation by p38-alpha/MAPK14 following various stresses. Inhibited by ligand 5B (2'-[2-(1,3-benzodioxol-5-yl)pyrimidin-4-yl]-5',6'-dihydrospiro[piperidine-4,7'-pyrrolo[3,2-c]pyridin]- 4'(1'h)-one) and ligand P4O (2-[2-(2-fluorophenyl)pyridin-4-yl]-1,5,6,7-tetrahydro- 4h-pyrrolo[3,2-c]pyridin-4-one), 2 ATP-competitive inhibitors. Its function is as follows. Stress-activated serine/threonine-protein kinase involved in cytokines production, endocytosis, cell migration, chromatin remodeling and transcriptional regulation. Following stress, it is phosphorylated and activated by MAP kinase p38-alpha/MAPK14, leading to phosphorylation of substrates. Phosphorylates serine in the peptide sequence, Hyd-X-R-X(2)-S, where Hyd is a large hydrophobic residue. MAPKAPK2 and MAPKAPK3, share the same function and substrate specificity, but MAPKAPK3 kinase activity and level in protein expression are lower compared to MAPKAPK2. Phosphorylates HSP27/HSPB1, KRT18, KRT20, RCSD1, RPS6KA3, TAB3 and TTP/ZFP36. Mediates phosphorylation of HSP27/HSPB1 in response to stress, leading to dissociate HSP27/HSPB1 from large small heat-shock protein (sHsps) oligomers and impair their chaperone activities and ability to protect against oxidative stress effectively. Involved in inflammatory response by regulating tumor necrosis factor (TNF) and IL6 production post-transcriptionally: acts by phosphorylating AU-rich elements (AREs)-binding proteins, such as TTP/ZFP36, leading to regulate the stability and translation of TNF and IL6 mRNAs. Phosphorylation of TTP/ZFP36, a major post-transcriptional regulator of TNF, promotes its binding to 14-3-3 proteins and reduces its ARE mRNA affinity leading to inhibition of dependent degradation of ARE-containing transcript. Involved in toll-like receptor signaling pathway (TLR) in dendritic cells: required for acute TLR-induced macropinocytosis by phosphorylating and activating RPS6KA3. Also acts as a modulator of Polycomb-mediated repression. The polypeptide is MAP kinase-activated protein kinase 3 (MAPKAPK3) (Homo sapiens (Human)).